The following is an 898-amino-acid chain: Phosphoenolpyruvate carboxylase (898 aa).

Residues His-134 and Lys-564 contribute to the active site.

This sequence belongs to the PEPCase type 1 family. Requires Mg(2+) as cofactor.

It carries out the reaction oxaloacetate + phosphate = phosphoenolpyruvate + hydrogencarbonate. In terms of biological role, forms oxaloacetate, a four-carbon dicarboxylic acid source for the tricarboxylic acid cycle. This chain is Phosphoenolpyruvate carboxylase, found in Chromobacterium violaceum (strain ATCC 12472 / DSM 30191 / JCM 1249 / CCUG 213 / NBRC 12614 / NCIMB 9131 / NCTC 9757 / MK).